The following is a 209-amino-acid chain: Large ribosomal subunit protein uL3 (209 aa).

Q150 is subject to N5-methylglutamine.

Belongs to the universal ribosomal protein uL3 family. As to quaternary structure, part of the 50S ribosomal subunit. Forms a cluster with proteins L14 and L19. Methylated by PrmB.

In terms of biological role, one of the primary rRNA binding proteins, it binds directly near the 3'-end of the 23S rRNA, where it nucleates assembly of the 50S subunit. This Salmonella arizonae (strain ATCC BAA-731 / CDC346-86 / RSK2980) protein is Large ribosomal subunit protein uL3.